The sequence spans 311 residues: Aspartate carbamoyltransferase catalytic subunit (311 aa).

Residues arginine 55 and threonine 56 each coordinate carbamoyl phosphate. L-aspartate is bound at residue lysine 85. Carbamoyl phosphate contacts are provided by arginine 106, histidine 135, and glutamine 138. L-aspartate is bound by residues arginine 168 and arginine 230. Residues leucine 268 and proline 269 each contribute to the carbamoyl phosphate site.

Belongs to the aspartate/ornithine carbamoyltransferase superfamily. ATCase family. As to quaternary structure, heterododecamer (2C3:3R2) of six catalytic PyrB chains organized as two trimers (C3), and six regulatory PyrI chains organized as three dimers (R2).

The enzyme catalyses carbamoyl phosphate + L-aspartate = N-carbamoyl-L-aspartate + phosphate + H(+). Its pathway is pyrimidine metabolism; UMP biosynthesis via de novo pathway; (S)-dihydroorotate from bicarbonate: step 2/3. Catalyzes the condensation of carbamoyl phosphate and aspartate to form carbamoyl aspartate and inorganic phosphate, the committed step in the de novo pyrimidine nucleotide biosynthesis pathway. This Buchnera aphidicola subsp. Schizaphis graminum (strain Sg) protein is Aspartate carbamoyltransferase catalytic subunit.